The primary structure comprises 336 residues: CST complex subunit STN1 (336 aa).

The OB DNA-binding region spans 49-126; the sequence is VDILGTVVCV…EVVASIFYKV (78 aa). Winged helix-turn-helix (wHTH) regions lie at residues 162-263 and 264-336; these read QSQE…YVTD and HDKE…YTAF.

It belongs to the CTC1 family. In terms of assembly, component of the CST complex.

The protein resides in the nucleus. Its subcellular location is the chromosome. It localises to the telomere. Component of the CST complex proposed to act as a specialized replication factor promoting DNA replication under conditions of replication stress or natural replication barriers such as the telomere duplex. The CST complex binds single-stranded DNA with high affinity in a sequence-independent manner, while isolated subunits bind DNA with low affinity by themselves. Initially the CST complex has been proposed to protect telomeres from DNA degradation. However, the CST complex has been shown to be involved in several aspects of telomere replication. This chain is CST complex subunit STN1, found in Aquarana catesbeiana (American bullfrog).